Consider the following 351-residue polypeptide: Protein-glutamate methylesterase/protein-glutamine glutaminase 1 (351 aa).

Positions 1 to 115 constitute a Response regulatory domain; sequence MVDDSAVVRQ…KQFLTESADE (115 aa). Asp49 bears the 4-aspartylphosphate mark. The 191-residue stretch at 161–351 folds into the CheB-type methylesterase domain; it reads AQTTERIVAI…MAREIVTQLQ (191 aa). Catalysis depends on residues Ser173, His199, and Asp295.

The protein belongs to the CheB family. In terms of processing, phosphorylated by CheA. Phosphorylation of the N-terminal regulatory domain activates the methylesterase activity.

It localises to the cytoplasm. It carries out the reaction [protein]-L-glutamate 5-O-methyl ester + H2O = L-glutamyl-[protein] + methanol + H(+). The enzyme catalyses L-glutaminyl-[protein] + H2O = L-glutamyl-[protein] + NH4(+). Its function is as follows. Involved in chemotaxis. Part of a chemotaxis signal transduction system that modulates chemotaxis in response to various stimuli. Catalyzes the demethylation of specific methylglutamate residues introduced into the chemoreceptors (methyl-accepting chemotaxis proteins or MCP) by CheR. Also mediates the irreversible deamidation of specific glutamine residues to glutamic acid. The chain is Protein-glutamate methylesterase/protein-glutamine glutaminase 1 from Xanthomonas oryzae pv. oryzae (strain MAFF 311018).